A 204-amino-acid polypeptide reads, in one-letter code: Probable GTP-binding protein EngB (204 aa).

Residues 23–195 (TLPEIAFVGR…ASALMQLLAM (173 aa)) form the EngB-type G domain. Residues 31–38 (GRSNVGKS), 58–62 (GRTRE), 76–79 (DLPG), 143–146 (TKID), and 174–176 (FSA) each bind GTP. Positions 38 and 60 each coordinate Mg(2+).

It belongs to the TRAFAC class TrmE-Era-EngA-EngB-Septin-like GTPase superfamily. EngB GTPase family. Mg(2+) is required as a cofactor.

Functionally, necessary for normal cell division and for the maintenance of normal septation. The sequence is that of Probable GTP-binding protein EngB from Gemmatimonas aurantiaca (strain DSM 14586 / JCM 11422 / NBRC 100505 / T-27).